The chain runs to 240 residues: uncharacterized protein (240 aa).

Residues 1–85 (MSGFIKSTLL…LCGCCCWTNT (85 aa)) lie on the Cytoplasmic side of the membrane. The helical transmembrane segment at 86-106 (IGWAPLLALLPVIGPLLMYWV) threads the bilayer. At 107–131 (HDKLIELADDRYKLPAEIKVKMHGN) the chain is on the extracellular side. Residues 132–152 (IVIDLLISLVPILGSVFAWLH) form a helical membrane-spanning segment. At 153–240 (ACSTRNAAIV…TNGRPQRGYR (88 aa)) the chain is on the cytoplasmic side. The disordered stretch occupies residues 181 to 240 (QKEENEKHSNANTAPPVVGGNKNVNGNRNNSKMYNRPPVTAPPAPAYTRSTNGRPQRGYR). Residues 197–210 (VVGGNKNVNGNRNN) are compositionally biased toward low complexity.

The protein resides in the membrane. This is an uncharacterized protein from Saccharomyces cerevisiae (strain ATCC 204508 / S288c) (Baker's yeast).